The sequence spans 130 residues: Small ribosomal subunit protein uS8A (130 aa).

The protein belongs to the universal ribosomal protein uS8 family. Component of the small ribosomal subunit (SSU). Mature ribosomes consist of a small (40S) and a large (60S) subunit. The 40S subunit contains about 32 different proteins and 1 molecule of RNA (18S). The 60S subunit contains 45 different proteins and 3 molecules of RNA (25S, 5.8S and 5S).

The protein localises to the cytoplasm. Component of the ribosome, a large ribonucleoprotein complex responsible for the synthesis of proteins in the cell. The small ribosomal subunit (SSU) binds messenger RNAs (mRNAs) and translates the encoded message by selecting cognate aminoacyl-transfer RNA (tRNA) molecules. The large subunit (LSU) contains the ribosomal catalytic site termed the peptidyl transferase center (PTC), which catalyzes the formation of peptide bonds, thereby polymerizing the amino acids delivered by tRNAs into a polypeptide chain. The nascent polypeptides leave the ribosome through a tunnel in the LSU and interact with protein factors that function in enzymatic processing, targeting, and the membrane insertion of nascent chains at the exit of the ribosomal tunnel. The polypeptide is Small ribosomal subunit protein uS8A (RPS22A) (Candida albicans (strain SC5314 / ATCC MYA-2876) (Yeast)).